Here is a 328-residue protein sequence, read N- to C-terminus: 4-hydroxy-3-methylbut-2-enyl diphosphate reductase (328 aa).

C13 lines the [4Fe-4S] cluster pocket. The (2E)-4-hydroxy-3-methylbut-2-enyl diphosphate site is built by H41 and H75. Residues H41 and H75 each coordinate dimethylallyl diphosphate. Isopentenyl diphosphate-binding residues include H41 and H75. Residue C97 coordinates [4Fe-4S] cluster. H125 contributes to the (2E)-4-hydroxy-3-methylbut-2-enyl diphosphate binding site. H125 serves as a coordination point for dimethylallyl diphosphate. Residue H125 participates in isopentenyl diphosphate binding. E127 functions as the Proton donor in the catalytic mechanism. Position 168 (T168) interacts with (2E)-4-hydroxy-3-methylbut-2-enyl diphosphate. C225 lines the [4Fe-4S] cluster pocket. Positions 253, 254, 255, and 302 each coordinate (2E)-4-hydroxy-3-methylbut-2-enyl diphosphate. The dimethylallyl diphosphate site is built by S253, S254, N255, and S302. Residues S253, S254, N255, and S302 each coordinate isopentenyl diphosphate.

Belongs to the IspH family. [4Fe-4S] cluster serves as cofactor.

It catalyses the reaction isopentenyl diphosphate + 2 oxidized [2Fe-2S]-[ferredoxin] + H2O = (2E)-4-hydroxy-3-methylbut-2-enyl diphosphate + 2 reduced [2Fe-2S]-[ferredoxin] + 2 H(+). The enzyme catalyses dimethylallyl diphosphate + 2 oxidized [2Fe-2S]-[ferredoxin] + H2O = (2E)-4-hydroxy-3-methylbut-2-enyl diphosphate + 2 reduced [2Fe-2S]-[ferredoxin] + 2 H(+). It participates in isoprenoid biosynthesis; dimethylallyl diphosphate biosynthesis; dimethylallyl diphosphate from (2E)-4-hydroxy-3-methylbutenyl diphosphate: step 1/1. Its pathway is isoprenoid biosynthesis; isopentenyl diphosphate biosynthesis via DXP pathway; isopentenyl diphosphate from 1-deoxy-D-xylulose 5-phosphate: step 6/6. Its function is as follows. Catalyzes the conversion of 1-hydroxy-2-methyl-2-(E)-butenyl 4-diphosphate (HMBPP) into a mixture of isopentenyl diphosphate (IPP) and dimethylallyl diphosphate (DMAPP). Acts in the terminal step of the DOXP/MEP pathway for isoprenoid precursor biosynthesis. This is 4-hydroxy-3-methylbut-2-enyl diphosphate reductase from Chlorobium chlorochromatii (strain CaD3).